The primary structure comprises 601 residues: Elongation factor 4 (601 aa).

Residues 2–184 (DLIRNFSIIA…EMIARVPPPT (183 aa)) form the tr-type G domain. Residues 14 to 19 (DHGKST) and 131 to 134 (NKID) each bind GTP.

This sequence belongs to the TRAFAC class translation factor GTPase superfamily. Classic translation factor GTPase family. LepA subfamily.

It is found in the cell inner membrane. The catalysed reaction is GTP + H2O = GDP + phosphate + H(+). Its function is as follows. Required for accurate and efficient protein synthesis under certain stress conditions. May act as a fidelity factor of the translation reaction, by catalyzing a one-codon backward translocation of tRNAs on improperly translocated ribosomes. Back-translocation proceeds from a post-translocation (POST) complex to a pre-translocation (PRE) complex, thus giving elongation factor G a second chance to translocate the tRNAs correctly. Binds to ribosomes in a GTP-dependent manner. The polypeptide is Elongation factor 4 (Polynucleobacter asymbioticus (strain DSM 18221 / CIP 109841 / QLW-P1DMWA-1) (Polynucleobacter necessarius subsp. asymbioticus)).